Consider the following 565-residue polypeptide: MLRLNLRFLSFLLCIIQSVELQAAPSVPTFLTENGLTYCTHASGFSFNPQTADAGTSMNVVTEQIYNKLFDIKNHSATLTPMLAQSYSISADGKEILLNLRHGVKFHQTPWFTPTRDFNAEDVVFSINRVLGGHNTYLPTLAETNVTYSNPQYRVFHEQARKVRFPYFDSIKLNEKIKSVTALSPYQVKIELFAPDSSILSHLASQYAIIFSQEYAYQLSADDNLAQLDTHPVGTGPYQVKDYVYNQYVRLVRNENYWKKEAKIEHIIVDLSTDRSGRLVKFFNNECQIASYPEVSQIGLLKNDDKHYYMQSTDGMNLAYLAFNFDKPLMRDHEIRAAISQSLNRARIIHSIYHNTATVANNIIPEVSWASSVNTPEFEFDYNPKIAKNKLADKNLLLNLWVINEEQVYNPAPFKIAEMIKWDLAQAGVKVKVRAVTRPFLTAQLRNQSENYDLILSGWLAGNLDPDGFMRPILSCGTKNELTNLSNWCNEEFDQFMDRAITTSHLSSRAKAYNEAQELVLRELPIIPIANVKRILVANSRVKGVKMTPFGSLDFSTLYFIQEKY.

An N-terminal signal peptide occupies residues Met1–Ala23.

Belongs to the bacterial solute-binding protein 5 family.

It is found in the periplasm. In terms of biological role, involved in a peptide intake transport system that plays a role in the resistance to antimicrobial peptides. The protein is Peptide transport periplasmic protein SapA (sapA) of Haemophilus influenzae (strain ATCC 51907 / DSM 11121 / KW20 / Rd).